Here is a 1034-residue protein sequence, read N- to C-terminus: Presequence protease, mitochondrial (1034 aa).

Residues 1-29 constitute a mitochondrion transit peptide; the sequence is MLKGGMLSRWKMWSPQYKILRNHLINFKS. Position 128 (His-128) interacts with Zn(2+). Glu-131 functions as the Proton acceptor in the catalytic mechanism. The Zn(2+) site is built by His-132 and Glu-229.

It belongs to the peptidase M16 family. PreP subfamily. In terms of assembly, homodimer. Zn(2+) is required as a cofactor.

It is found in the mitochondrion. ATP-independent protease that degrades mitochondrial transit peptides after their cleavage. Also degrades other unstructured peptides. This is Presequence protease, mitochondrial from Drosophila melanogaster (Fruit fly).